Consider the following 338-residue polypeptide: Ketol-acid reductoisomerase (NADP(+)) (338 aa).

In terms of domain architecture, KARI N-terminal Rossmann spans 1–181 (MKVFYDKDCD…GGGKGGIIET (181 aa)). Residues 24–27 (YGSQ), Arg-47, and Ser-52 each bind NADP(+). His-107 is a catalytic residue. Gly-133 serves as a coordination point for NADP(+). In terms of domain architecture, KARI C-terminal knotted spans 182–327 (NFKEETETDL…GQLRAMMPWI (146 aa)). The Mg(2+) site is built by Asp-190, Glu-194, Glu-226, and Glu-230. A substrate-binding site is contributed by Ser-251.

This sequence belongs to the ketol-acid reductoisomerase family. It depends on Mg(2+) as a cofactor.

It catalyses the reaction (2R)-2,3-dihydroxy-3-methylbutanoate + NADP(+) = (2S)-2-acetolactate + NADPH + H(+). The catalysed reaction is (2R,3R)-2,3-dihydroxy-3-methylpentanoate + NADP(+) = (S)-2-ethyl-2-hydroxy-3-oxobutanoate + NADPH + H(+). The protein operates within amino-acid biosynthesis; L-isoleucine biosynthesis; L-isoleucine from 2-oxobutanoate: step 2/4. It participates in amino-acid biosynthesis; L-valine biosynthesis; L-valine from pyruvate: step 2/4. Its function is as follows. Involved in the biosynthesis of branched-chain amino acids (BCAA). Catalyzes an alkyl-migration followed by a ketol-acid reduction of (S)-2-acetolactate (S2AL) to yield (R)-2,3-dihydroxy-isovalerate. In the isomerase reaction, S2AL is rearranged via a Mg-dependent methyl migration to produce 3-hydroxy-3-methyl-2-ketobutyrate (HMKB). In the reductase reaction, this 2-ketoacid undergoes a metal-dependent reduction by NADPH to yield (R)-2,3-dihydroxy-isovalerate. This is Ketol-acid reductoisomerase (NADP(+)) from Delftia acidovorans (strain DSM 14801 / SPH-1).